Consider the following 306-residue polypeptide: Homoserine kinase (306 aa).

95–105 (PQSRGLGSSAA) serves as a coordination point for ATP.

The protein belongs to the GHMP kinase family. Homoserine kinase subfamily.

The protein localises to the cytoplasm. It carries out the reaction L-homoserine + ATP = O-phospho-L-homoserine + ADP + H(+). The protein operates within amino-acid biosynthesis; L-threonine biosynthesis; L-threonine from L-aspartate: step 4/5. Functionally, catalyzes the ATP-dependent phosphorylation of L-homoserine to L-homoserine phosphate. This is Homoserine kinase from Corynebacterium urealyticum (strain ATCC 43042 / DSM 7109).